The primary structure comprises 566 residues: Unconventional myosin-VIIa (566 aa).

Residues 67–566 (MMEDMIQHLG…AGVVYYESQG (500 aa)) enclose the Myosin motor domain. 160–167 (GESGAGKT) serves as a coordination point for ATP.

It belongs to the TRAFAC class myosin-kinesin ATPase superfamily. Myosin family. Might homodimerize in a two headed molecule through the formation of a coiled-coil rod. Identified in a complex with USH1C and USH1G. Interacts with MYRIP. Interacts with RPE65. Interacts with CIB2. May interact with CALM. Interacts with WHRN. Interacts with PLEKHB1 (via PH domain). Interacts with PCDH15. Interacts with TWF2. Interacts with USH1G. Interacts with MYH9. Interacts (via MyTH4-FERM domains) with cytoplasmic regions of ADGRV1 and USH2A. Interacts with PDZD7 (via MyTH4-FERM domains). Interacts with CALML4.

It localises to the cytoplasm. The protein localises to the cell cortex. It is found in the cytoskeleton. Its subcellular location is the synapse. In terms of biological role, myosins are actin-based motor molecules with ATPase activity. Unconventional myosins serve in intracellular movements. Their highly divergent tails bind to membranous compartments, which are then moved relative to actin filaments. In the retina, plays an important role in the renewal of the outer photoreceptor disks. Plays an important role in the distribution and migration of retinal pigment epithelial (RPE) melanosomes and phagosomes, and in the regulation of opsin transport in retinal photoreceptors. In the inner ear, plays an important role in differentiation, morphogenesis and organization of cochlear hair cell bundles. Motor protein that is a part of the functional network formed by USH1C, USH1G, CDH23 and MYO7A that mediates mechanotransduction in cochlear hair cells. Required for normal hearing. Involved in hair-cell vesicle trafficking of aminoglycosides, which are known to induce ototoxicity. In Sus scrofa (Pig), this protein is Unconventional myosin-VIIa (MYO7A).